The sequence spans 522 residues: Peptide chain release factor 3 (522 aa).

The 268-residue stretch at 10–277 (ASRKTFAIIS…TFVDFAPAPS (268 aa)) folds into the tr-type G domain. GTP contacts are provided by residues 19–26 (SHPDAGKT), 87–91 (DTPGH), and 141–144 (NKMD).

The protein belongs to the TRAFAC class translation factor GTPase superfamily. Classic translation factor GTPase family. PrfC subfamily.

It localises to the cytoplasm. Increases the formation of ribosomal termination complexes and stimulates activities of RF-1 and RF-2. It binds guanine nucleotides and has strong preference for UGA stop codons. It may interact directly with the ribosome. The stimulation of RF-1 and RF-2 is significantly reduced by GTP and GDP, but not by GMP. The chain is Peptide chain release factor 3 from Listeria monocytogenes serovar 1/2a (strain ATCC BAA-679 / EGD-e).